The sequence spans 360 residues: uncharacterized protein (360 aa).

Solcar repeat units lie at residues 34 to 153, 172 to 256, and 266 to 355; these read VGVL…LSVW, PDWS…FKTN, and NPFV…FKFL. The next 6 membrane-spanning stretches (helical) occupy residues 40-60, 125-145, 178-198, 225-247, 269-289, and 327-348; these read VSAS…LDVV, LWSG…FYFT, AVAG…IEMI, ISSF…GIYW, VVSF…THPF, and FSSG…MISF.

This sequence belongs to the mitochondrial carrier (TC 2.A.29) family.

The protein resides in the mitochondrion inner membrane. This is an uncharacterized protein from Caenorhabditis elegans.